Reading from the N-terminus, the 608-residue chain is Replication protein E1 (608 aa).

The short motif at 83–85 (KRK) is the Nuclear localization signal element. Serine 88 and serine 96 each carry phosphoserine; by host. Residues 148-311 (QGGVGSGHYT…TMIHHQTADS (164 aa)) are DNA-binding region. The 151-residue stretch at 410 to 560 (LNFIVFLDKF…FPFDANDTPL (151 aa)) folds into the SF3 helicase domain. 436–443 (GPPDTGKS) lines the ATP pocket. Residue lysine 517 forms a Glycyl lysine isopeptide (Lys-Gly) (interchain with G-Cter in SUMO) linkage.

The protein belongs to the papillomaviridae E1 protein family. As to quaternary structure, can form hexamers. Interacts with E2 protein; this interaction increases E1 DNA binding specificity. Interacts with host DNA polymerase subunit POLA2. Interacts with host single stranded DNA-binding protein RPA1. Interacts with host TOP1; this interaction stimulates the enzymatic activity of TOP1. Phosphorylated. In terms of processing, sumoylated.

It localises to the host nucleus. It carries out the reaction Couples ATP hydrolysis with the unwinding of duplex DNA by translocating in the 3'-5' direction.. It catalyses the reaction ATP + H2O = ADP + phosphate + H(+). Functionally, ATP-dependent DNA 3'-5' helicase required for initiation of viral DNA replication. It forms a complex with the viral E2 protein. The E1-E2 complex binds to the replication origin which contains binding sites for both proteins. During the initial step, a dimer of E1 interacts with a dimer of protein E2 leading to a complex that binds the viral origin of replication with high specificity. Then, a second dimer of E1 displaces the E2 dimer in an ATP-dependent manner to form the E1 tetramer. Following this, two E1 monomers are added to each half of the site, which results in the formation of two E1 trimers on the viral ori. Subsequently, two hexamers will be created. The double hexamer acts as a bi-directional helicase machinery and unwinds the viral DNA and then recruits the host DNA polymerase to start replication. This is Replication protein E1 from Homo sapiens (Human).